The following is a 420-amino-acid chain: Putative transporter AmpG 3 (420 aa).

12 helical membrane passes run 6 to 26 (YLIG…LIFF), 41 to 61 (IVGS…WSPF), 79 to 99 (GWAL…LKRS), 104 to 124 (LCIT…QDIV), 141 to 161 (IAFT…SVGA), 166 to 186 (IIFG…VGPI), 230 to 250 (LLLI…PMAM), 274 to 294 (LLIM…IGIF), 297 to 317 (VLIG…LATI), 324 to 344 (FIIT…IISI), 359 to 381 (YSIS…GICA), and 386 to 406 (WPVF…IFYI).

Belongs to the major facilitator superfamily.

It is found in the cell inner membrane. This chain is Putative transporter AmpG 3 (ampG3), found in Rickettsia typhi (strain ATCC VR-144 / Wilmington).